Consider the following 283-residue polypeptide: MGLAKQKDSQEFAQPVWHYTLAGGISSVICRFMIAPFDVIKIRMQITQSSLRPVFKETVQKEGVRALWRGNVVAELLYLVYGAAEFVAFSKLKHLTENLAMNDHAVNFLCGTSAGIFATLTSYPLDTMRTKFASYAKTPHMLPATKKIYAEAGIKGFFPGLKFSVIQIGPYAGCFFMFYRASEAVLSPLGLALSSTLSGVIAGAGSKAIMFPVDTVVKTLQTFPSNYKSFKDCFLSIYRNSGIKGLYRGLSVSMLKVAPGRAITMLIYEQTLQGLRTLSSPEA.

Solcar repeat units follow at residues 14 to 95 (QPVW…LKHL), 102 to 185 (NDHA…SEAV), and 190 to 274 (GLAL…TLQG). Helical transmembrane passes span 20 to 40 (TLAGGISSVICRFMIAPFDVI), 70 to 90 (GNVVAELLYLVYGAAEFVAFS), 105 to 125 (AVNFLCGTSAGIFATLTSYPL), 157 to 177 (FFPGLKFSVIQIGPYAGCFFM), 184 to 204 (AVLSPLGLALSSTLSGVIAGA), and 249 to 266 (GLSVSMLKVAPGRAITML).

This sequence belongs to the mitochondrial carrier (TC 2.A.29) family.

The protein localises to the mitochondrion inner membrane. This is an uncharacterized protein from Schizosaccharomyces pombe (strain 972 / ATCC 24843) (Fission yeast).